A 2527-amino-acid chain; its full sequence is Leucine-rich repeat serine/threonine-protein kinase 2 (2527 aa).

A required for RAB29-mediated activation region spans residues 1 to 969; sequence MASGSCQGCE…RSSKLQSHMR (969 aa). Positions 319-348 form a coiled coil; it reads LTETIFLNQDLEEKNENQENDDEGEEDKLF. A phosphoserine mark is found at S910, S935, S955, and S973. LRR repeat units follow at residues 983–1004, 1012–1033, 1036–1057, 1059–1080, 1084–1105, 1108–1129, 1130–1150, 1156–1171, 1174–1196, 1197–1218, 1221–1245, 1246–1267, and 1269–1291; these read YITS…SQKC, HLEK…LCET, SLTH…LLKM, CIAN…DPTV, TLKQ…LTDV, KLEQ…LRLK, ELKI…NFLE, ESFS…MPFL, SMTI…LNLP, HLRS…AHWK, NLRE…YLWS, RVEK…IGCL, and NLTS…MGKL. S1292 is subject to Phosphoserine; by autocatalysis. A Roc domain is found at 1328–1511; it reads KAVPYNRMKL…KTIINESLNF (184 aa). Residue 1341 to 1348 participates in GTP binding; sequence GNTGSGKT. S1444 bears the Phosphoserine mark. The COR domain maps to 1546 to 1740; sequence PVIDRKRLLQ…RMYWRQGIYL (195 aa). Positions 1879 to 2138 constitute a Protein kinase domain; sequence QAPEFLLGDG…FDILNSAELV (260 aa). Positions 1885, 1887, 1888, 1891, 1893, 1904, 1906, 1947, 1948, 1950, 1954, and 1957 each coordinate ATP. The active-site Proton acceptor is the D1994. Residues H1998, L2001, A2016, and D2017 each coordinate ATP. Residue 2098-2121 participates in GTP binding; that stretch reads EYGCAPWPMVEKLIKQCLKENPQE. WD repeat units follow at residues 2139-2183, 2188-2228, 2233-2276, 2281-2327, 2333-2377, 2402-2438, and 2443-2497; these read CLTR…SFLD, GYTS…LVIN, KKRH…AIFE, KLKG…FSFS, QKLI…EVWD, KESK…LLLD, and RLIR…TVWD. 2295 to 2298 serves as a coordination point for GTP; the sequence is NVST.

The protein belongs to the protein kinase superfamily. TKL Ser/Thr protein kinase family. As to quaternary structure, homodimer. Homotetramer; when activated by GTP-bound RAB29. Interacts with PRKN, PRDX3, and TPCN2. Interacts with VPS35. Interacts (via N-terminus) with RAB29; this interaction is direct and stimulates kinase activity. Interacts (via ROC domain) with SEC16A. Interacts with APP; interaction promotes phosphorylation of 'Thr-743' of APP. Interacts with MAPT. Interacts with RAB8A, RAB10, and RAB12. Interacts (via N-terminus) with RAB32. Interacts with YWHAG; this interaction is dependent on phosphorylation of Ser-910 and either Ser-935 or Ser-1444. Interacts with SFN; this interaction is dependent on phosphorylation of Ser-910 and/or Ser-935. Requires Mg(2+) as cofactor. In terms of processing, autophosphorylated at Ser-1292; autophosphorylation is stimulated by RAB29. Phosphorylation of Ser-910 and either Ser-935 or Ser-1444 facilitates interaction with YWHAG. Phosphorylation of Ser-910 and/or Ser-935 facilitates interaction with SFN. Post-translationally, ubiquitinated by TRIM1; undergoes 'Lys-48'-linked polyubiquitination leading to proteasomal degradation. In terms of tissue distribution, expressed in pyramidal neurons in all cortical laminae of the visual cortex, in neurons of the substantia nigra pars compacta and caudate putamen (at protein level). Expressed in neutrophils (at protein level). Expressed in the brain. Expressed throughout the adult brain, but at a lower level than in heart and liver. Also expressed in placenta, lung, skeletal muscle, kidney and pancreas. In the brain, expressed in the cerebellum, cerebral cortex, medulla, spinal cord occipital pole, frontal lobe, temporal lobe and putamen. Expression is particularly high in brain dopaminoceptive areas.

It is found in the cytoplasmic vesicle. It localises to the perikaryon. Its subcellular location is the golgi apparatus membrane. The protein resides in the cell projection. The protein localises to the axon. It is found in the dendrite. It localises to the endoplasmic reticulum membrane. Its subcellular location is the secretory vesicle. The protein resides in the synaptic vesicle membrane. The protein localises to the endosome. It is found in the lysosome. It localises to the mitochondrion outer membrane. Its subcellular location is the cytoplasm. The protein resides in the cytoskeleton. The protein localises to the phagosome. It catalyses the reaction L-threonyl-[protein] + ATP = O-phospho-L-threonyl-[protein] + ADP + H(+). The enzyme catalyses L-seryl-[protein] + ATP = O-phospho-L-seryl-[protein] + ADP + H(+). It carries out the reaction GTP + H2O = GDP + phosphate + H(+). With respect to regulation, kinase activity is regulated by the GTPase activity of the ROC domain. GTP-bound LRRK2 kinase activity is stimulated by RAB29. Phosphorylation of RAB10 'Thr-73' is stimulated by RAB29 and RAB32. Inhibited by small molecule inhibitor MLi-2. Serine/threonine-protein kinase which phosphorylates a broad range of proteins involved in multiple processes such as neuronal plasticity, innate immunity, autophagy, and vesicle trafficking. Is a key regulator of RAB GTPases by regulating the GTP/GDP exchange and interaction partners of RABs through phosphorylation. Phosphorylates RAB3A, RAB3B, RAB3C, RAB3D, RAB5A, RAB5B, RAB5C, RAB8A, RAB8B, RAB10, RAB12, RAB29, RAB35, and RAB43. Regulates the RAB3IP-catalyzed GDP/GTP exchange for RAB8A through the phosphorylation of 'Thr-72' on RAB8A. Inhibits the interaction between RAB8A and GDI1 and/or GDI2 by phosphorylating 'Thr-72' on RAB8A. Regulates primary ciliogenesis through phosphorylation of RAB8A and RAB10, which promotes SHH signaling in the brain. Together with RAB29, plays a role in the retrograde trafficking pathway for recycling proteins, such as mannose-6-phosphate receptor (M6PR), between lysosomes and the Golgi apparatus in a retromer-dependent manner. Regulates neuronal process morphology in the intact central nervous system (CNS). Plays a role in synaptic vesicle trafficking. Plays an important role in recruiting SEC16A to endoplasmic reticulum exit sites (ERES) and in regulating ER to Golgi vesicle-mediated transport and ERES organization. Positively regulates autophagy through a calcium-dependent activation of the CaMKK/AMPK signaling pathway. The process involves activation of nicotinic acid adenine dinucleotide phosphate (NAADP) receptors, increase in lysosomal pH, and calcium release from lysosomes. Phosphorylates PRDX3. By phosphorylating APP on 'Thr-743', which promotes the production and the nuclear translocation of the APP intracellular domain (AICD), regulates dopaminergic neuron apoptosis. Acts as a positive regulator of innate immunity by mediating phosphorylation of RIPK2 downstream of NOD1 and NOD2, thereby enhancing RIPK2 activation. Independent of its kinase activity, inhibits the proteasomal degradation of MAPT, thus promoting MAPT oligomerization and secretion. In addition, has GTPase activity via its Roc domain which regulates LRRK2 kinase activity. Recruited by RAB29/RAB7L1 to overloaded lysosomes where it phosphorylates and stabilizes RAB8A and RAB10 which promote lysosomal content release and suppress lysosomal enlargement through the EHBP1 and EHBP1L1 effector proteins. The sequence is that of Leucine-rich repeat serine/threonine-protein kinase 2 (LRRK2) from Homo sapiens (Human).